The chain runs to 227 residues: MMRAGGLLKLGVLVSVLFVAVFLAFELLESNMNFNLGKVFTRYAPPDAVPTRPLRHKCGLSKSCPEDHFAFKITSGAASVVGPKMCFQDNVIMSGVKNNIGRGINIALLNGKTGELTKTDSFDMWTGDVNLLIKFLKDIEDGSIVMMATFDDPATKMNDEARNLIADLGSSSISILGFRDNWVFVGGKGIKTKSPFEQHIKNNAETNKYEGWPEVLEMEGCIPIKHD.

Positions 1–30 are cleaved as a signal peptide; the sequence is MMRAGGLLKLGVLVSVLFVAVFLAFELLES. Disulfide bonds link Cys58-Cys86 and Cys64-Cys221. The region spanning 67–225 is the GG-type lectin domain; that stretch reads DHFAFKITSG…LEMEGCIPIK (159 aa).

This sequence belongs to the FAM3 family.

The protein localises to the secreted. Its function is as follows. Involved in retinal laminar formation. The polypeptide is Protein FAM3C (fam3c) (Danio rerio (Zebrafish)).